A 277-amino-acid chain; its full sequence is Diaminopimelate epimerase (277 aa).

Substrate-binding residues include N13, Q46, and N66. C75 serves as the catalytic Proton donor. Substrate contacts are provided by residues 76–77, N159, N192, and 210–211; these read GN and ER. Residue C219 is the Proton acceptor of the active site. Residue 220-221 participates in substrate binding; it reads GT.

Belongs to the diaminopimelate epimerase family. As to quaternary structure, homodimer.

The protein resides in the cytoplasm. The enzyme catalyses (2S,6S)-2,6-diaminopimelate = meso-2,6-diaminopimelate. It participates in amino-acid biosynthesis; L-lysine biosynthesis via DAP pathway; DL-2,6-diaminopimelate from LL-2,6-diaminopimelate: step 1/1. Its function is as follows. Catalyzes the stereoinversion of LL-2,6-diaminopimelate (L,L-DAP) to meso-diaminopimelate (meso-DAP), a precursor of L-lysine and an essential component of the bacterial peptidoglycan. The polypeptide is Diaminopimelate epimerase (Aromatoleum aromaticum (strain DSM 19018 / LMG 30748 / EbN1) (Azoarcus sp. (strain EbN1))).